Consider the following 443-residue polypeptide: Probable D-serine dehydratase (443 aa).

Lysine 106 carries the N6-(pyridoxal phosphate)lysine modification.

This sequence belongs to the serine/threonine dehydratase family. DsdA subfamily. The cofactor is pyridoxal 5'-phosphate.

The enzyme catalyses D-serine = pyruvate + NH4(+). The chain is Probable D-serine dehydratase from Cupriavidus pinatubonensis (strain JMP 134 / LMG 1197) (Cupriavidus necator (strain JMP 134)).